Here is a 300-residue protein sequence, read N- to C-terminus: Tyrosine recombinase XerC (300 aa).

The Core-binding (CB) domain occupies 2 to 87; sequence TSLSPLLEKF…SIKSFYKYLV (86 aa). In terms of domain architecture, Tyr recombinase spans 108-294; sequence TLPKVLPVEE…TWEQLQQVYD (187 aa). Catalysis depends on residues arginine 148, lysine 172, histidine 246, arginine 249, and histidine 272. Tyrosine 281 functions as the O-(3'-phospho-DNA)-tyrosine intermediate in the catalytic mechanism.

Belongs to the 'phage' integrase family. XerC subfamily. Forms a cyclic heterotetrameric complex composed of two molecules of XerC and two molecules of XerD.

It is found in the cytoplasm. Site-specific tyrosine recombinase, which acts by catalyzing the cutting and rejoining of the recombining DNA molecules. The XerC-XerD complex is essential to convert dimers of the bacterial chromosome into monomers to permit their segregation at cell division. It also contributes to the segregational stability of plasmids. This Myxococcus xanthus protein is Tyrosine recombinase XerC.